The sequence spans 32 residues: Photosystem II reaction center protein Psb30 (32 aa).

Residues 3 to 23 (IVIVQLGSLALITLAGPIIIV) traverse the membrane as a helical segment.

This sequence belongs to the Psb30/Ycf12 family. In terms of assembly, PSII is composed of 1 copy each of membrane proteins PsbA, PsbB, PsbC, PsbD, PsbE, PsbF, PsbH, PsbI, PsbJ, PsbK, PsbL, PsbM, PsbT, PsbY, PsbZ, Psb30/Ycf12, peripheral proteins of the oxygen-evolving complex and a large number of cofactors. It forms dimeric complexes.

The protein localises to the plastid. The protein resides in the chloroplast thylakoid membrane. A core subunit of photosystem II (PSII), probably helps stabilize the reaction center. The protein is Photosystem II reaction center protein Psb30 of Euglena viridis (Cercaria viridis).